A 395-amino-acid chain; its full sequence is Chalcone synthase (395 aa).

Valine 2 carries the post-translational modification N-acetylvaline. Cysteine 169 is an active-site residue.

Belongs to the thiolase-like superfamily. Chalcone/stilbene synthases family.

The enzyme catalyses (E)-4-coumaroyl-CoA + 3 malonyl-CoA + 3 H(+) = 2',4,4',6'-tetrahydroxychalcone + 3 CO2 + 4 CoA. Its pathway is secondary metabolite biosynthesis; flavonoid biosynthesis. Its function is as follows. The primary product of this enzyme is 4,2',4',6'-tetrahydroxychalcone (also termed naringenin-chalcone or chalcone) which can under specific conditions spontaneously isomerize into naringenin. The polypeptide is Chalcone synthase (CHS) (Cardamine amara (Large bitter-cress)).